The sequence spans 150 residues: 3-hydroxyacyl-[acyl-carrier-protein] dehydratase FabZ (150 aa).

The active site involves histidine 53.

It belongs to the thioester dehydratase family. FabZ subfamily.

It localises to the cytoplasm. The enzyme catalyses a (3R)-hydroxyacyl-[ACP] = a (2E)-enoyl-[ACP] + H2O. In terms of biological role, involved in unsaturated fatty acids biosynthesis. Catalyzes the dehydration of short chain beta-hydroxyacyl-ACPs and long chain saturated and unsaturated beta-hydroxyacyl-ACPs. This Photorhabdus laumondii subsp. laumondii (strain DSM 15139 / CIP 105565 / TT01) (Photorhabdus luminescens subsp. laumondii) protein is 3-hydroxyacyl-[acyl-carrier-protein] dehydratase FabZ.